Here is a 994-residue protein sequence, read N- to C-terminus: Regulator of telomere elongation helicase 1 homolog (994 aa).

The 310-residue stretch at 7–316 folds into the Helicase ATP-binding domain; it reads AGIPVHFPFE…DDLMLLKEML (310 aa). 42–49 lines the ATP pocket; the sequence is SPTGTGKT. Cys146, Cys164, Cys173, and Cys209 together coordinate [4Fe-4S] cluster. Positions 252–255 match the DEAH box motif; the sequence is DEAH. The interval 861–887 is disordered; the sequence is SSGLVKIHKRERSSPPGSSQSSSQTAK. A compositionally biased stretch (low complexity) spans 874–884; sequence SPPGSSQSSSQ.

Belongs to the helicase family. RAD3/XPD subfamily.

The protein localises to the nucleus. The catalysed reaction is ATP + H2O = ADP + phosphate + H(+). In terms of biological role, a probable ATP-dependent DNA helicase implicated in DNA repair and the maintenance of genomic stability. Acts as an anti-recombinase to counteract toxic recombination and limit crossover during meiosis. Regulates meiotic recombination and crossover homeostasis by physically dissociating strand invasion events and thereby promotes noncrossover repair by meiotic synthesis dependent strand annealing (SDSA) as well as disassembly of D loop recombination intermediates. The protein is Regulator of telomere elongation helicase 1 homolog of Drosophila ananassae (Fruit fly).